Reading from the N-terminus, the 139-residue chain is MKKGTVLNADISAVISRLGHTDTLVVCDAGLPVPRSSTRIDMALTQGVPSFMQVLEVVTTEMQVEAAVIAEEIKTHNPQLHATLLTHLEQLQQHQGNTIEIRYTSHEQFKKQTADSQAVIRSGECSPFANIILCAGVTF.

The active-site Proton donor is the histidine 20. Residues aspartate 28, histidine 106, and 128–130 (FAN) each bind substrate.

Belongs to the RbsD / FucU family. RbsD subfamily. In terms of assembly, homodecamer.

Its subcellular location is the cytoplasm. The enzyme catalyses beta-D-ribopyranose = beta-D-ribofuranose. It participates in carbohydrate metabolism; D-ribose degradation; D-ribose 5-phosphate from beta-D-ribopyranose: step 1/2. Functionally, catalyzes the interconversion of beta-pyran and beta-furan forms of D-ribose. In Klebsiella pneumoniae (strain 342), this protein is D-ribose pyranase.